Reading from the N-terminus, the 190-residue chain is uncharacterized protein (190 aa).

The signal sequence occupies residues 1–28 (MEFSLQYITIFIFVILFLIGLFSSKSRS).

This is an uncharacterized protein from Haemophilus influenzae (strain ATCC 51907 / DSM 11121 / KW20 / Rd).